A 463-amino-acid chain; its full sequence is Fumarate hydratase class II (463 aa).

Substrate is bound by residues 97–99 (SGT), arginine 125, 128–131 (HPND), 138–140 (SSN), and threonine 186. Positions 121 to 134 (RGEGRKVHPNDHVN) are enriched in basic and acidic residues. The segment at 121–142 (RGEGRKVHPNDHVNRGQSSNDT) is disordered. The Proton donor/acceptor role is filled by histidine 187. The active site involves serine 317. Residues serine 318 and 323–325 (KVN) contribute to the substrate site.

It belongs to the class-II fumarase/aspartase family. Fumarase subfamily. As to quaternary structure, homotetramer.

The protein resides in the cytoplasm. It carries out the reaction (S)-malate = fumarate + H2O. It functions in the pathway carbohydrate metabolism; tricarboxylic acid cycle; (S)-malate from fumarate: step 1/1. In terms of biological role, involved in the TCA cycle. Catalyzes the stereospecific interconversion of fumarate to L-malate. In Bordetella bronchiseptica (strain ATCC BAA-588 / NCTC 13252 / RB50) (Alcaligenes bronchisepticus), this protein is Fumarate hydratase class II.